Consider the following 366-residue polypeptide: Protein BIG GRAIN 1-like B (366 aa).

Disordered regions lie at residues 42-73 (DSST…DFNR) and 129-148 (FERS…EHGS). Over residues 56–73 (QNREDTRVSANRRDDFNR) the composition is skewed to basic and acidic residues.

Belongs to the BIG GRAIN 1 (BG1) plant protein family.

The protein localises to the cell membrane. Involved in auxin transport. Regulator of the auxin signaling pathway. This chain is Protein BIG GRAIN 1-like B, found in Arabidopsis thaliana (Mouse-ear cress).